The primary structure comprises 60 residues: Large ribosomal subunit protein bL32 (60 aa).

Residues 1-60 are disordered; it reads MAVQQNKKSPSKRGMHRSHDALTNPPLAIEPTTGETHLRHHISPNGFYRGKKVIKTKNDD. The segment covering 49–60 has biased composition (basic residues); the sequence is RGKKVIKTKNDD.

It belongs to the bacterial ribosomal protein bL32 family.

In Nitrosomonas eutropha (strain DSM 101675 / C91 / Nm57), this protein is Large ribosomal subunit protein bL32.